The primary structure comprises 294 residues: MDLDKVKTFYNNVAPQLRDLFGIFIKRCKEDNITISAGHLAYVTLLSLVPFIMVTFTIMSAFPAFASVRSKLEHFVFSNFVPTASDVVHKYMTDFVGNASQMSAIGILSLLVVALMLISNVDKTLNRIWRTQSDRPIVYTFAIYWMVITLGPMLIGSSVVVSSYLTGLAAFTEEYTPGLGTFLLSLVPSGAALLAFAILYMVVPNRRVYARHAFVGAIVATIAFEITKSGFALYVTNFPSYELIYGALAVVPILFLWVYLSWIIVLFGAEFTCSLGEAFENKKAEHAPRKVPKE.

The next 6 membrane-spanning stretches (helical) occupy residues 45 to 65 (LLSL…FPAF), 99 to 119 (ASQM…MLIS), 141 to 161 (FAIY…SVVV), 182 to 202 (FLLS…LYMV), 213 to 233 (AFVG…GFAL), and 247 to 267 (ALAV…IVLF).

The protein belongs to the UPF0761 family.

Its subcellular location is the cell inner membrane. This Alteromonas mediterranea (strain DSM 17117 / CIP 110805 / LMG 28347 / Deep ecotype) protein is UPF0761 membrane protein MADE_1017605/MADE_1018330.